A 174-amino-acid chain; its full sequence is Small ribosomal subunit protein uS5 (174 aa).

The region spanning 16-79 (LSELLVSVRR…NAAKKSMIRV (64 aa)) is the S5 DRBM domain.

This sequence belongs to the universal ribosomal protein uS5 family. In terms of assembly, part of the 30S ribosomal subunit. Contacts proteins S4 and S8.

With S4 and S12 plays an important role in translational accuracy. Functionally, located at the back of the 30S subunit body where it stabilizes the conformation of the head with respect to the body. In Anaplasma marginale (strain Florida), this protein is Small ribosomal subunit protein uS5.